A 466-amino-acid chain; its full sequence is Ceramide glucosyltransferase 1 (466 aa).

The helical transmembrane segment at 70-90 threads the bilayer; that stretch reads LALSGCIFVSVLYLVHIIAFF. Aspartate 148 is a short sequence motif (D1). A short sequence motif (D2) is located at residue aspartate 200. Position 294 (aspartate 294) is a short sequence motif, D3. Aspartate 294 (proton acceptor) is an active-site residue. The (Q/R)XXRW signature appears at 330-334; it reads RIGRW. Transmembrane regions (helical) follow at residues 354 to 374 and 403 to 423; these read CVTS…YSVY and TPFL…FIFI.

The protein belongs to the glycosyltransferase 2 family. In terms of tissue distribution, expressed in excretory canals, pharyngeal intestinal valve, intestine and intestinal rectal valve.

Its subcellular location is the membrane. The enzyme catalyses an N-acylsphing-4-enine + UDP-alpha-D-glucose = a beta-D-glucosyl-(1&lt;-&gt;1')-N-acylsphing-4-enine + UDP + H(+). It carries out the reaction an N-acyl-15-methylhexadecasphing-4-enine + UDP-alpha-D-glucose = an N-acyl-1-beta-D-glucosyl-15-methylhexadecasphing-4-enine + UDP + H(+). It participates in lipid metabolism; sphingolipid metabolism. Its function is as follows. Catalyzes the first glycosylation step in glycosphingolipid biosynthesis, the transfer of glucose to ceramide to produce glucosylceramides (GlcCer). GlcCer are known to contribute to the physical properties and physiological functions of membranes and may regulate signal transduction. Only branched-chain sphingoid bases like 15-methylhexadecasphing-4-enine are used for generating complex sphingolipids in Caenorhabditis elegans. Together with cgt-3, plays a role in the trafficking of proteins such as mig-14 to the cell membrane in intestinal cells. This is Ceramide glucosyltransferase 1 from Caenorhabditis elegans.